Reading from the N-terminus, the 312-residue chain is Olfactory receptor 1D5 (312 aa).

Topologically, residues 1–25 are extracellular; the sequence is MDGDNQSENSQFLLLGISESPEQQR. N-linked (GlcNAc...) asparagine glycosylation is present at N5. The helical transmembrane segment at 26 to 49 threads the bilayer; it reads ILFWMFLSMYLVTVLGNVLIILAI. Residues 50–57 lie on the Cytoplasmic side of the membrane; it reads SSDSHLHT. The chain crosses the membrane as a helical span at residues 58–79; sequence PMYFFLANLSFTDLFFVTNTIP. The Extracellular segment spans residues 80 to 100; sequence KMLVNFQSQNKAISYAGCLTQ. C97 and C189 are disulfide-bonded. Residues 101 to 120 form a helical membrane-spanning segment; sequence LYFLVSLVTLDNLILAVMAY. Residues 121 to 140 are Cytoplasmic-facing; the sequence is DRYVATCCPLHYVTAMSPGL. Residues 141 to 158 form a helical membrane-spanning segment; that stretch reads CVLLLSLCWGLSVLYGLL. Residues 159 to 196 are Extracellular-facing; it reads LTFLLTRVTFCGPREIHYLFCDMYILLWLACSNTHIIH. A helical transmembrane segment spans residues 197–220; it reads TALIATGCFIFLTPLGFMTTSYVR. Residues 221–237 are Cytoplasmic-facing; the sequence is IVRTILQMPSASKKYKT. The helical transmembrane segment at 238-260 threads the bilayer; sequence FSTCASHLGVVSLFYGTLAMVYL. The Extracellular segment spans residues 261–271; sequence QPLHTYSMKDS. A helical membrane pass occupies residues 272–291; that stretch reads VATVMYAVLTPMMNPFIYRL. Residues 292–312 are Cytoplasmic-facing; that stretch reads RNKDMHGAPGRVLWRPFQRPK.

This sequence belongs to the G-protein coupled receptor 1 family.

Its subcellular location is the cell membrane. In terms of biological role, odorant receptor. In Homo sapiens (Human), this protein is Olfactory receptor 1D5 (OR1D5).